A 483-amino-acid chain; its full sequence is tRNA (guanine(37)-N(1))-methyltransferase (483 aa).

Residues 1–24 (MEEAATLQSLSISSSSPFPNNSSP) form a disordered region. The segment covering 9 to 24 (SLSISSSSPFPNNSSP) has biased composition (low complexity). Residues His-252, 290–291 (DL), and Asn-379 each bind S-adenosyl-L-methionine.

It belongs to the class I-like SAM-binding methyltransferase superfamily. TRM5/TYW2 family. Monomer.

The protein resides in the mitochondrion matrix. Its subcellular location is the nucleus. It localises to the cytoplasm. It carries out the reaction guanosine(37) in tRNA + S-adenosyl-L-methionine = N(1)-methylguanosine(37) in tRNA + S-adenosyl-L-homocysteine + H(+). Functionally, specifically methylates the N1 position of guanosine-37 in various cytoplasmic and mitochondrial tRNAs. Methylation is not dependent on the nature of the nucleoside 5' of the target nucleoside. This is the first step in the biosynthesis of wybutosine (yW), a modified base adjacent to the anticodon of tRNAs and required for accurate decoding. This chain is tRNA (guanine(37)-N(1))-methyltransferase, found in Ajellomyces capsulatus (strain G186AR / H82 / ATCC MYA-2454 / RMSCC 2432) (Darling's disease fungus).